We begin with the raw amino-acid sequence, 449 residues long: NADP-specific glutamate dehydrogenase (449 aa).

Positions 92, 113, and 116 each coordinate substrate. K128 functions as the Proton donor in the catalytic mechanism. G167 is a binding site for substrate. NADP(+) is bound by residues T211 and N242. A substrate-binding site is contributed by S380.

The protein belongs to the Glu/Leu/Phe/Val dehydrogenases family. As to quaternary structure, homohexamer.

The catalysed reaction is L-glutamate + NADP(+) + H2O = 2-oxoglutarate + NH4(+) + NADPH + H(+). In terms of biological role, catalyzes the reversible oxidative deamination of glutamate to alpha-ketoglutarate and ammonia. In Haemophilus influenzae (strain ATCC 51907 / DSM 11121 / KW20 / Rd), this protein is NADP-specific glutamate dehydrogenase (gdhA).